We begin with the raw amino-acid sequence, 960 residues long: UvrABC system protein A (960 aa).

Residue 35 to 42 (GLSGSGKS) coordinates ATP. The C4-type zinc-finger motif lies at 270 to 297 (CAHCNVSVPELQPRLFSFNAPFGACPSC). ABC transporter domains lie at 327–605 (FKPE…QASL) and 625–953 (GNGN…WYIK). An ATP-binding site is contributed by 657 to 664 (GVSGSGKS). A C4-type zinc finger spans residues 756–782 (CEHCKGDGVITIEMNFLPDVYITCDVC).

Belongs to the ABC transporter superfamily. UvrA family. In terms of assembly, forms a heterotetramer with UvrB during the search for lesions.

The protein localises to the cytoplasm. In terms of biological role, the UvrABC repair system catalyzes the recognition and processing of DNA lesions. UvrA is an ATPase and a DNA-binding protein. A damage recognition complex composed of 2 UvrA and 2 UvrB subunits scans DNA for abnormalities. When the presence of a lesion has been verified by UvrB, the UvrA molecules dissociate. This Treponema pallidum (strain Nichols) protein is UvrABC system protein A.